The primary structure comprises 412 residues: Hyaluronidase-3 (412 aa).

Residues 1 to 22 form the signal peptide; that stretch reads MITQLGLTLVVGLTLCLVHVQA. Disulfide bonds link cysteine 42/cysteine 332, cysteine 206/cysteine 221, cysteine 357/cysteine 368, cysteine 362/cysteine 396, and cysteine 398/cysteine 407. N-linked (GlcNAc...) asparagine glycosylation occurs at asparagine 69. Glutamate 129 functions as the Proton donor in the catalytic mechanism. The N-linked (GlcNAc...) asparagine glycan is linked to asparagine 216. Residues 353-408 enclose the EGF-like domain; that stretch reads AATACSHQRCHGHGRCSWKDPGQMEAFLHLQPDDNLGAWKSFRCRCYLGWSGPTCL.

The protein belongs to the glycosyl hydrolase 56 family. N-glycosylated.

The protein resides in the secreted. Its subcellular location is the cell membrane. It localises to the cytoplasmic vesicle. The protein localises to the secretory vesicle. It is found in the acrosome. The protein resides in the endoplasmic reticulum. Its subcellular location is the early endosome. The catalysed reaction is Random hydrolysis of (1-&gt;4)-linkages between N-acetyl-beta-D-glucosamine and D-glucuronate residues in hyaluronate.. Functionally, facilitates sperm penetration into the layer of cumulus cells surrounding the egg by digesting hyaluronic acid. Involved in induction of the acrosome reaction in the sperm. Involved in follicular atresia, the breakdown of immature ovarian follicles that are not selected to ovulate. Induces ovarian granulosa cell apoptosis, possibly via apoptotic signaling pathway involving CASP8 and CASP3 activation, and poly(ADP-ribose) polymerase (PARP) cleavage. Has no hyaluronidase activity in embryonic fibroblasts in vitro. Has no hyaluronidase activity in granulosa cells in vitro. The chain is Hyaluronidase-3 (Hyal3) from Rattus norvegicus (Rat).